The chain runs to 310 residues: Cytochrome f (310 aa).

The signal sequence occupies residues 1–26; the sequence is MNIKLTLLVLISIINLMIIQPIQTLA. Heme-binding residues include Phe27, Cys47, Cys50, and His51. The chain crosses the membrane as a helical span at residues 276–296; it reads IKGMIVFFFTVTIAQIFFVLK.

The protein belongs to the cytochrome f family. As to quaternary structure, the 4 large subunits of the cytochrome b6-f complex are cytochrome b6, subunit IV (17 kDa polypeptide, petD), cytochrome f and the Rieske protein, while the 4 small subunits are PetG, PetL, PetM and PetN. The complex functions as a dimer. The cofactor is heme.

It localises to the plastid. The protein resides in the chloroplast thylakoid membrane. Its function is as follows. Component of the cytochrome b6-f complex, which mediates electron transfer between photosystem II (PSII) and photosystem I (PSI), cyclic electron flow around PSI, and state transitions. This is Cytochrome f from Gracilaria tenuistipitata var. liui (Red alga).